A 330-amino-acid polypeptide reads, in one-letter code: Probable cytosolic iron-sulfur protein assembly protein ciao1-A (330 aa).

WD repeat units lie at residues 14-53, 59-98, 103-142, 148-187, 192-231, 243-282, and 294-330; these read HPDS…WECK, GHQR…FECL, GHEN…EYEC, SHTQ…WECR, GHTS…GGQD, FHGR…DPDQ, and AHSQ…QSEV.

It belongs to the WD repeat CIA1 family. In terms of assembly, component of the CIA complex.

Functionally, key component of the cytosolic iron-sulfur protein assembly (CIA) complex, a multiprotein complex that mediates the incorporation of iron-sulfur cluster into extramitochondrial Fe/S proteins. The protein is Probable cytosolic iron-sulfur protein assembly protein ciao1-A (ciao1a) of Salmo salar (Atlantic salmon).